Consider the following 450-residue polypeptide: UDP-N-acetylmuramoylalanine--D-glutamate ligase (450 aa).

Residue 115 to 121 (GTNGKST) participates in ATP binding.

The protein belongs to the MurCDEF family.

It is found in the cytoplasm. The catalysed reaction is UDP-N-acetyl-alpha-D-muramoyl-L-alanine + D-glutamate + ATP = UDP-N-acetyl-alpha-D-muramoyl-L-alanyl-D-glutamate + ADP + phosphate + H(+). It participates in cell wall biogenesis; peptidoglycan biosynthesis. Its function is as follows. Cell wall formation. Catalyzes the addition of glutamate to the nucleotide precursor UDP-N-acetylmuramoyl-L-alanine (UMA). This Syntrophotalea carbinolica (strain DSM 2380 / NBRC 103641 / GraBd1) (Pelobacter carbinolicus) protein is UDP-N-acetylmuramoylalanine--D-glutamate ligase.